Reading from the N-terminus, the 1231-residue chain is Cohesin subunit SA-2 (1231 aa).

Methionine 1 is subject to N-acetylmethionine. The tract at residues 1-75 is disordered; sequence MIAAPEIPTD…GPNRMNGHHQ (75 aa). Residues 36-48 are compositionally biased toward basic residues; it reads KQGKGKTCKKGKK. One can recognise an SCD domain in the interval 293–378; the sequence is FVHRYRDAIA…SRFKDRIVSM (86 aa). Lysine 607 carries the post-translational modification N6-acetyllysine. Residues serine 1058, serine 1061, serine 1064, and serine 1065 each carry the phosphoserine modification. Positions 1064–1083 are disordered; the sequence is SSRGSTVRSKKSKPSTGKRK. Basic residues predominate over residues 1071–1082; the sequence is RSKKSKPSTGKR. Threonine 1112 carries the post-translational modification Phosphothreonine. 2 positions are modified to phosphoserine: serine 1177 and serine 1178.

This sequence belongs to the SCC3 family. Interacts directly with RAD21 in cohesin complex. Cohesin complexes are composed of a heterodimer between a SMC1 protein (SMC1A or SMC1B) and SMC3, which are attached via their hinge domain, and RAD21 which link them at their heads, and one STAG protein (STAG1, STAG2 or STAG3). In cohesin complexes, STAG2 is mutually exclusive with STAG1 and STAG3. In terms of processing, phosphorylated by PLK1. The large dissociation of cohesin from chromosome arms during prophase is partly due to its phosphorylation.

It localises to the nucleus. The protein localises to the chromosome. It is found in the centromere. Functionally, component of cohesin complex, a complex required for the cohesion of sister chromatids after DNA replication. The cohesin complex apparently forms a large proteinaceous ring within which sister chromatids can be trapped. At anaphase, the complex is cleaved and dissociates from chromatin, allowing sister chromatids to segregate. The cohesin complex may also play a role in spindle pole assembly during mitosis. This is Cohesin subunit SA-2 (STAG2) from Homo sapiens (Human).